A 282-amino-acid chain; its full sequence is Elongation factor Ts (282 aa).

The tract at residues 80–83 is involved in Mg(2+) ion dislocation from EF-Tu; the sequence is TDFV.

This sequence belongs to the EF-Ts family.

It localises to the cytoplasm. Its function is as follows. Associates with the EF-Tu.GDP complex and induces the exchange of GDP to GTP. It remains bound to the aminoacyl-tRNA.EF-Tu.GTP complex up to the GTP hydrolysis stage on the ribosome. This Protochlamydia amoebophila (strain UWE25) protein is Elongation factor Ts.